A 509-amino-acid chain; its full sequence is Movement protein (509 aa).

It localises to the host cell junction. The protein localises to the host plasmodesma. The protein resides in the host cytoplasm. Transports viral genome to neighboring plant cells directly through plasmosdesmata, without any budding. The movement protein allows efficient cell to cell propagation, by bypassing the host cell wall barrier. This chain is Movement protein, found in Rice dwarf virus (isolate Fujian) (RDV).